Consider the following 147-residue polypeptide: Hemoglobin subunit beta (147 aa).

The Globin domain maps to 3 to 147 (HWTAEEKQII…VAHALARKYH (145 aa)). Heme b-binding residues include H64 and H93.

Heterotetramer of two alpha (or alpha-D) and two beta chains. As to expression, red blood cells.

In terms of biological role, involved in oxygen transport from the lung to the various peripheral tissues. The beta chain is a component of adult hemoglobin A and D. The polypeptide is Hemoglobin subunit beta (Aythya fuligula (Tufted duck)).